Consider the following 535-residue polypeptide: T-complex protein 1 subunit beta (535 aa).

Ala-2 is subject to N-acetylalanine. Ser-3 is subject to Phosphoserine. Lys-13 is modified (N6-acetyllysine). Residue Gly-44 coordinates ADP. Gly-44 is a binding site for ATP. Position 97 (Asp-97) interacts with Mg(2+). 6 residues coordinate ADP: Gly-98, Thr-99, Thr-100, Ser-101, Ser-168, and Ser-169. ATP contacts are provided by Gly-98, Thr-99, and Thr-100. An N6-acetyllysine modification is found at Lys-181. Residue Lys-248 forms a Glycyl lysine isopeptide (Lys-Gly) (interchain with G-Cter in SUMO2) linkage. The residue at position 260 (Ser-260) is a Phosphoserine. At Thr-261 the chain carries Phosphothreonine. Residues Gly-410, Glu-495, and Lys-500 each coordinate ADP. Residues Glu-495 and Lys-500 each contribute to the ATP site.

The protein belongs to the TCP-1 chaperonin family. As to quaternary structure, component of the chaperonin-containing T-complex (TRiC), a hexadecamer composed of two identical back-to-back stacked rings enclosing a protein folding chamber. Each ring is made up of eight different subunits: TCP1/CCT1, CCT2, CCT3, CCT4, CCT5, CCT6A/CCT6, CCT7, CCT8. Interacts with PACRG. Interacts with FLCN. Interacts with DLEC1. Interacts with SVEP1. In terms of processing, the N-terminus is blocked.

The protein localises to the cytoplasm. It carries out the reaction ATP + H2O = ADP + phosphate + H(+). In terms of biological role, component of the chaperonin-containing T-complex (TRiC), a molecular chaperone complex that assists the folding of actin, tubulin and other proteins upon ATP hydrolysis. The TRiC complex mediates the folding of WRAP53/TCAB1, thereby regulating telomere maintenance. As part of the TRiC complex may play a role in the assembly of BBSome, a complex involved in ciliogenesis regulating transports vesicles to the cilia. The chain is T-complex protein 1 subunit beta (Cct2) from Mus musculus (Mouse).